The chain runs to 310 residues: Glycine-rich RNA-binding protein RZ1C (310 aa).

The 79-residue stretch at 7–85 folds into the RRM domain; that stretch reads SRIFVGGLSP…RVISVNRAEP (79 aa). S15 carries the post-translational modification Phosphoserine. The segment at 82–120 is disordered; it reads RAEPKLGRDDGESHGSRGGRDSGYSIAGKGSFGGGGGGG. The segment covering 83 to 101 has biased composition (basic and acidic residues); sequence AEPKLGRDDGESHGSRGGR. Gly residues predominate over residues 111–120; sequence GSFGGGGGGG. The segment at 128 to 143 adopts a CCHC-type zinc-finger fold; the sequence is CFKCGRVGHWARDCPS. The interval 224–310 is disordered; the sequence is RFAGGDRYSR…YPSSSTFDRY (87 aa). Composition is skewed to basic and acidic residues over residues 226-236 and 244-253; these read AGGDRYSRGSD and DKARSFERDI. Residues 261–273 show a composition bias toward gly residues; sequence RYGGGRAGGPIRG. S295 carries the post-translational modification Phosphoserine.

As to expression, expressed in roots, rosette and cauline leaves, stems, floral buds and flowers.

The protein resides in the nucleus. Functionally, binds RNA and DNA sequences non-specifically. May be involved in tolerance to cold stress. This is Glycine-rich RNA-binding protein RZ1C from Arabidopsis thaliana (Mouse-ear cress).